The chain runs to 672 residues: tRNA 5-methylaminomethyl-2-thiouridine biosynthesis bifunctional protein MnmC (672 aa).

A tRNA (mnm(5)s(2)U34)-methyltransferase region spans residues 1–243 (MTSITHAELG…KREMIAGCME (243 aa)). The FAD-dependent cmnm(5)s(2)U34 oxidoreductase stretch occupies residues 269–672 (IGGGIASAAL…LRKGKAITEL (404 aa)).

This sequence in the N-terminal section; belongs to the methyltransferase superfamily. tRNA (mnm(5)s(2)U34)-methyltransferase family. It in the C-terminal section; belongs to the DAO family. FAD is required as a cofactor.

The protein localises to the cytoplasm. It carries out the reaction 5-aminomethyl-2-thiouridine(34) in tRNA + S-adenosyl-L-methionine = 5-methylaminomethyl-2-thiouridine(34) in tRNA + S-adenosyl-L-homocysteine + H(+). In terms of biological role, catalyzes the last two steps in the biosynthesis of 5-methylaminomethyl-2-thiouridine (mnm(5)s(2)U) at the wobble position (U34) in tRNA. Catalyzes the FAD-dependent demodification of cmnm(5)s(2)U34 to nm(5)s(2)U34, followed by the transfer of a methyl group from S-adenosyl-L-methionine to nm(5)s(2)U34, to form mnm(5)s(2)U34. This Vibrio vulnificus (strain CMCP6) protein is tRNA 5-methylaminomethyl-2-thiouridine biosynthesis bifunctional protein MnmC.